The chain runs to 361 residues: Glutamate 5-kinase (361 aa).

Lys-7 serves as a coordination point for ATP. Substrate-binding residues include Ser-47, Asp-134, and Asn-146. ATP contacts are provided by residues Thr-166–Asp-167 and Thr-209–Lys-215. The region spanning Leu-274 to Asn-345 is the PUA domain.

It belongs to the glutamate 5-kinase family.

Its subcellular location is the cytoplasm. The catalysed reaction is L-glutamate + ATP = L-glutamyl 5-phosphate + ADP. The protein operates within amino-acid biosynthesis; L-proline biosynthesis; L-glutamate 5-semialdehyde from L-glutamate: step 1/2. In terms of biological role, catalyzes the transfer of a phosphate group to glutamate to form L-glutamate 5-phosphate. In Prochlorococcus marinus (strain MIT 9313), this protein is Glutamate 5-kinase.